The chain runs to 185 residues: Sulfopyruvate decarboxylase subunit beta (185 aa).

It belongs to the TPP enzyme family. Heterododecamer composed of 6 subunits alpha and 6 subunits beta. Thiamine diphosphate serves as cofactor.

It catalyses the reaction 3-sulfopyruvate + H(+) = sulfoacetaldehyde + CO2. Its pathway is cofactor biosynthesis; coenzyme M biosynthesis; sulfoacetaldehyde from phosphoenolpyruvate and sulfite: step 4/4. Functionally, involved in the biosynthesis of the coenzyme M (2-mercaptoethanesulfonic acid). Catalyzes the decarboxylation of sulfopyruvate to sulfoacetaldehyde. The polypeptide is Sulfopyruvate decarboxylase subunit beta (Methanothermobacter thermautotrophicus (strain ATCC 29096 / DSM 1053 / JCM 10044 / NBRC 100330 / Delta H) (Methanobacterium thermoautotrophicum)).